The primary structure comprises 159 residues: MTRSEKVEIIAKLEEGFKASEAIVVCNYRGLSTKKLEELRNNARENNVKVQIVKNTLANIALNNSGKTGLVLKDTNIYLWGEDQLSVSKVAAKFEENNDKFEIKTAHIEGEVADVAKVKALAKMPSRNELLAMLLQVWNAPITNFTIGLNALKNKKESE.

The protein belongs to the universal ribosomal protein uL10 family. In terms of assembly, part of the ribosomal stalk of the 50S ribosomal subunit. The N-terminus interacts with L11 and the large rRNA to form the base of the stalk. The C-terminus forms an elongated spine to which L12 dimers bind in a sequential fashion forming a multimeric L10(L12)X complex.

Forms part of the ribosomal stalk, playing a central role in the interaction of the ribosome with GTP-bound translation factors. This Campylobacter jejuni subsp. jejuni serotype O:2 (strain ATCC 700819 / NCTC 11168) protein is Large ribosomal subunit protein uL10 (rplJ).